The chain runs to 168 residues: Peptidoglycan-associated lipoprotein (168 aa).

A signal peptide spans 1–24; that stretch reads MGRIAALTRNPVMIALVAMLAIAG. A lipid anchor (N-palmitoyl cysteine) is attached at Cys-25. A lipid anchor (S-diacylglycerol cysteine) is attached at Cys-25. In terms of domain architecture, OmpA-like spans 50-167; sequence AQDFTVNIGD…RAVTTLSGAG (118 aa).

It belongs to the Pal lipoprotein family. As to quaternary structure, the Tol-Pal system is composed of five core proteins: the inner membrane proteins TolA, TolQ and TolR, the periplasmic protein TolB and the outer membrane protein Pal. They form a network linking the inner and outer membranes and the peptidoglycan layer.

It localises to the cell outer membrane. In terms of biological role, part of the Tol-Pal system, which plays a role in outer membrane invagination during cell division and is important for maintaining outer membrane integrity. This Mesorhizobium japonicum (strain LMG 29417 / CECT 9101 / MAFF 303099) (Mesorhizobium loti (strain MAFF 303099)) protein is Peptidoglycan-associated lipoprotein.